The following is a 701-amino-acid chain: Phytyl ester synthase 2, chloroplastic (701 aa).

Residues 1–65 (MAVTVLPSVS…KNNDENRATV (65 aa)) constitute a chloroplast transit peptide. Positions 37–64 (SVTSTSSPPTPSSGVQRRRKNNDENRAT) are disordered.

It belongs to the diacylglycerol acyltransferase family.

It is found in the plastid. It localises to the chloroplast. Its subcellular location is the plastoglobule. It carries out the reaction a 1,2-diacyl-3-O-(beta-D-galactosyl)-sn-glycerol + a 1,2-diacylglycerol = an acyl-3-O-(beta-D-galactosyl)-sn-glycerol + a triacylglycerol. The catalysed reaction is a 1,2-diacylglycerol + a fatty acyl-CoA = a triacylglycerol + CoA. The enzyme catalyses a fatty acyl-[ACP] + a 1,2-diacylglycerol = a triacylglycerol + holo-[ACP]. It catalyses the reaction phytol + a fatty acyl-CoA = a fatty acid phytyl ester + CoA. It carries out the reaction phytol + tetradecanoyl-CoA = tetradecanoate phytyl ester + CoA. The catalysed reaction is a 1,3-diacylglycerol + a fatty acyl-CoA = a triacylglycerol + CoA. The enzyme catalyses 1,2-dihexanoylglycerol + tetradecanoyl-CoA = 1,2-dihexanoyl-3-tetradecanoylglycerol + CoA. It catalyses the reaction 1,2-dihexanoylglycerol + hexadecanoyl-CoA = 1,2-dihexanoyl-3-hexadecanoylglycerol + CoA. It carries out the reaction 1,2-dihexanoylglycerol + octadecanoyl-CoA = 1,2-dihexanoyl-3-octadecanoylglycerol + CoA. The catalysed reaction is (7Z,10Z,13Z)-hexadecatrienoyl-CoA + 1,2-dihexanoylglycerol = 1,2-dihexanoyl-3-(7Z,10Z,13Z-hexadecatrienoyl)-glycerol + CoA. The enzyme catalyses 1,2-dihexanoylglycerol + (9Z)-octadecenoyl-CoA = 1,2-dihexanoyl-3-(9Z-octadecenoyl)-glycerol + CoA. It catalyses the reaction 1,2-dihexanoylglycerol + (9Z,12Z,15Z)-octadecatrienoyl-CoA = 1,2-dihexanoyl-3-(9Z,12Z,15Z-octadecatrienoyl)-glycerol + CoA. It carries out the reaction phytol + decanoyl-CoA = decanoate phytyl ester + CoA. The catalysed reaction is (7Z,10Z,13Z)-hexadecatrienoyl-CoA + phytol = (7Z,10Z,13Z)-hexadecatrienoate phytyl ester + CoA. The enzyme catalyses phytol + dodecanoyl-CoA = dodecanoate phytyl ester + CoA. In terms of biological role, acyltransferase involved in fatty acid phytyl ester synthesis in chloroplasts, a process required for the maintenance of the photosynthetic membrane integrity during abiotic stress and senescence. Exhibits phytyl ester synthesis and diacylglycerol acyltransferase activities with broad substrate specificities, and can employ acyl-CoAs, acyl carrier proteins, and galactolipids as acyl donors. The sequence is that of Phytyl ester synthase 2, chloroplastic from Arabidopsis thaliana (Mouse-ear cress).